The sequence spans 106 residues: Flagellar transcriptional regulator FlhD (106 aa).

It belongs to the FlhD family. In terms of assembly, homodimer; disulfide-linked. Forms a heterohexamer composed of two FlhC and four FlhD subunits. Each FlhC binds a FlhD dimer, forming a heterotrimer, and a hexamer assembles by dimerization of two heterotrimers.

Its subcellular location is the cytoplasm. Functions in complex with FlhC as a master transcriptional regulator that regulates transcription of several flagellar and non-flagellar operons by binding to their promoter region. Activates expression of class 2 flagellar genes, including fliA, which is a flagellum-specific sigma factor that turns on the class 3 genes. Also regulates genes whose products function in a variety of physiological pathways. The protein is Flagellar transcriptional regulator FlhD of Burkholderia pseudomallei (strain 1710b).